We begin with the raw amino-acid sequence, 87 residues long: Small ribosomal subunit protein uS17 (87 aa).

It belongs to the universal ribosomal protein uS17 family. In terms of assembly, part of the 30S ribosomal subunit.

One of the primary rRNA binding proteins, it binds specifically to the 5'-end of 16S ribosomal RNA. In Geobacillus sp. (strain WCH70), this protein is Small ribosomal subunit protein uS17.